Reading from the N-terminus, the 546-residue chain is Thermolysin (546 aa).

The signal sequence occupies residues 1–25; that stretch reads MNKRAMLGAIGLAFGLMAWPFGASA. The propeptide at 26–228 is activation peptide; it reads KEKSMVWNEQ…EAKPGGGQPV (203 aa). Positions 287, 289, 291, and 368 each coordinate Ca(2+). His372 is a binding site for Zn(2+). Glu373 is a catalytic residue. Zn(2+)-binding residues include His376 and Glu396. Residues Glu407, Asn413, Asp415, Glu417, Glu420, Tyr423, Thr424, Ile427, and Asp430 each coordinate Ca(2+). The active-site Proton donor is His461.

Belongs to the peptidase M4 family. The cofactor is Ca(2+). It depends on Zn(2+) as a cofactor.

It is found in the secreted. It catalyses the reaction Preferential cleavage: Xaa-|-Leu &gt; Xaa-|-Phe.. In terms of biological role, extracellular zinc metalloprotease. The polypeptide is Thermolysin (Alicyclobacillus acidocaldarius subsp. acidocaldarius (Bacillus acidocaldarius)).